Consider the following 119-residue polypeptide: Large ribosomal subunit protein bL20 (119 aa).

This sequence belongs to the bacterial ribosomal protein bL20 family.

Binds directly to 23S ribosomal RNA and is necessary for the in vitro assembly process of the 50S ribosomal subunit. It is not involved in the protein synthesizing functions of that subunit. The chain is Large ribosomal subunit protein bL20 from Latilactobacillus sakei subsp. sakei (strain 23K) (Lactobacillus sakei subsp. sakei).